A 298-amino-acid polypeptide reads, in one-letter code: Protoheme IX farnesyltransferase (298 aa).

8 helical membrane passes run 16–36 (VVAL…PGMP), 45–65 (ALGF…NQLL), 97–117 (VLIV…TAVL), 141–161 (IVIG…AVTG), 172–192 (SLLV…LAIF), 223–243 (VLLA…VFYL), 244–264 (GGAV…LDPP), and 277–297 (VVYL…LPWV).

This sequence belongs to the UbiA prenyltransferase family. Protoheme IX farnesyltransferase subfamily.

The protein resides in the cell inner membrane. It carries out the reaction heme b + (2E,6E)-farnesyl diphosphate + H2O = Fe(II)-heme o + diphosphate. It participates in porphyrin-containing compound metabolism; heme O biosynthesis; heme O from protoheme: step 1/1. In terms of biological role, converts heme B (protoheme IX) to heme O by substitution of the vinyl group on carbon 2 of heme B porphyrin ring with a hydroxyethyl farnesyl side group. The sequence is that of Protoheme IX farnesyltransferase from Xanthomonas campestris pv. campestris (strain 8004).